The following is a 170-amino-acid chain: Endoribonuclease YbeY (170 aa).

The Zn(2+) site is built by His-128, His-132, and His-138.

This sequence belongs to the endoribonuclease YbeY family. Zn(2+) is required as a cofactor.

It localises to the cytoplasm. In terms of biological role, single strand-specific metallo-endoribonuclease involved in late-stage 70S ribosome quality control and in maturation of the 3' terminus of the 16S rRNA. In Ruegeria sp. (strain TM1040) (Silicibacter sp.), this protein is Endoribonuclease YbeY.